A 201-amino-acid chain; its full sequence is Small ribosomal subunit protein uS10m (201 aa).

Belongs to the universal ribosomal protein uS10 family. As to quaternary structure, component of the mitochondrial ribosome small subunit (28S) which comprises a 12S rRNA and about 30 distinct proteins.

It is found in the mitochondrion. This Pongo abelii (Sumatran orangutan) protein is Small ribosomal subunit protein uS10m (MRPS10).